The sequence spans 597 residues: uncharacterized protein (597 aa).

The next 5 helical transmembrane spans lie at V37 to V57, I67 to A87, G109 to I129, S134 to W154, and A162 to V182. Residues H393–S597 enclose the Histidine kinase domain.

Its subcellular location is the cell membrane. This is an uncharacterized protein from Chloroflexus aurantiacus (strain ATCC 29366 / DSM 635 / J-10-fl).